Consider the following 86-residue polypeptide: MRLFLSLPVLVVALLTILEGPGPAQGAPEAVDTSTGLDKLKEFGNTLEDKVREFFNRVKESDIPAKTRNWFSETLQKVKEKLRIES.

The signal sequence occupies residues 1–26 (MRLFLSLPVLVVALLTILEGPGPAQG).

This sequence belongs to the apolipoprotein C1 family.

It is found in the secreted. Functionally, inhibitor of lipoprotein binding to the low density lipoprotein (LDL) receptor, LDL receptor-related protein, and very low density lipoprotein (VLDL) receptor. Associates with high density lipoproteins (HDL) and the triacylglycerol-rich lipoproteins in the plasma and makes up about 10% of the protein of the VLDL and 2% of that of HDL. Appears to interfere directly with fatty acid uptake and is also the major plasma inhibitor of cholesteryl ester transfer protein (CETP). Binds free fatty acids and reduces their intracellular esterification. Modulates the interaction of APOE with beta-migrating VLDL and inhibits binding of beta-VLDL to the LDL receptor-related protein. The polypeptide is Apolipoprotein C-I (APOC1) (Plecturocebus moloch (Dusky titi monkey)).